Reading from the N-terminus, the 899-residue chain is Ewing's tumor-associated antigen 1 homolog (899 aa).

Positions 1-82 (MSRRRKHGDS…TEERYETPKR (82 aa)) are disordered. Residues 71 to 81 (SNTEERYETPK) show a composition bias toward basic and acidic residues. The ATR-activation domain (AAD) signature appears at 105-111 (IFWDQNS). Residues 180 to 210 (TKLKSQNQEEELMKLAKQFDKNMEELDVIQE) adopt a coiled-coil conformation. Residues Lys-416 and Lys-444 each participate in a glycyl lysine isopeptide (Lys-Gly) (interchain with G-Cter in SUMO2) cross-link. Ser-467 carries the phosphoserine modification. Residues Lys-485 and Lys-539 each participate in a glycyl lysine isopeptide (Lys-Gly) (interchain with G-Cter in SUMO2) cross-link. Positions 607 to 622 (DDVDDDILYQACDDIE) match the RBM1 motif motif. Ser-810 carries the phosphoserine modification. The segment at 833 to 899 (NKTVNPLPGK…AQASSVKKGR (67 aa)) is disordered. Positions 859–877 (PSKEEEEKNRKCSPEEIQR) are enriched in basic and acidic residues. The short motif at 868–890 (RKCSPEEIQRKRQAALIRRMAKA) is the RBM2 motif element.

Interacts (via RBM1 motif) with RPA1. Interacts (via RBM2 motif) with RPA2. Interacts (via the ATR-activation domain motif) with ATR. Phosphorylated by ATR.

The protein localises to the nucleus. Functionally, replication stress response protein that accumulates at DNA damage sites and promotes replication fork progression and integrity. Recruited to stalled replication forks via interaction with the RPA complex and directly stimulates ATR kinase activity independently of TOPBP1. Probably only regulates a subset of ATR targets. The protein is Ewing's tumor-associated antigen 1 homolog of Bos taurus (Bovine).